Reading from the N-terminus, the 291-residue chain is U3 small nucleolar ribonucleoprotein protein IMP4 (291 aa).

Residues 83-264 form the Brix domain; sequence PKVMITTSRD…LYMIRLGTLE (182 aa).

As to quaternary structure, part of the small subunit (SSU) processome, composed of more than 70 proteins and the RNA chaperone small nucleolar RNA (snoRNA) U3. Component of a heterotrimeric complex containing IMP3, IMP4 and MPHOSPH10. Interacts with MPHOSPH10.

It is found in the nucleus. Its subcellular location is the nucleolus. Its function is as follows. Component of the 60-80S U3 small nucleolar ribonucleoprotein (U3 snoRNP). Required for the early cleavages during pre-18S ribosomal RNA processing. Part of the small subunit (SSU) processome, first precursor of the small eukaryotic ribosomal subunit. During the assembly of the SSU processome in the nucleolus, many ribosome biogenesis factors, an RNA chaperone and ribosomal proteins associate with the nascent pre-rRNA and work in concert to generate RNA folding, modifications, rearrangements and cleavage as well as targeted degradation of pre-ribosomal RNA by the RNA exosome. The polypeptide is U3 small nucleolar ribonucleoprotein protein IMP4 (Homo sapiens (Human)).